Here is a 105-residue protein sequence, read N- to C-terminus: Intermembrane phospholipid transport system binding protein MlaB (105 aa).

In terms of domain architecture, STAS spans Trp-4–Ile-105.

In terms of assembly, the complex is composed of two ATP-binding proteins (MlaF), two transmembrane proteins (MlaE), two cytoplasmic solute-binding proteins (MlaB) and six periplasmic solute-binding proteins (MlaD).

Its subcellular location is the cytoplasm. Functionally, part of the ABC transporter complex MlaFEDB, which is involved in a phospholipid transport pathway that maintains lipid asymmetry in the outer membrane by retrograde trafficking of phospholipids from the outer membrane to the inner membrane. MlaB plays critical roles in both the assembly and activity of the complex. May act by modulating MlaF structure and stability. This is Intermembrane phospholipid transport system binding protein MlaB from Haemophilus influenzae (strain ATCC 51907 / DSM 11121 / KW20 / Rd).